The sequence spans 431 residues: 3-phosphoshikimate 1-carboxyvinyltransferase (431 aa).

Residues K21, S22, and R26 each coordinate 3-phosphoshikimate. Residue K21 participates in phosphoenolpyruvate binding. Phosphoenolpyruvate contacts are provided by G93 and R121. 5 residues coordinate 3-phosphoshikimate: S166, Q168, S192, D317, and K344. Q168 provides a ligand contact to phosphoenolpyruvate. The active-site Proton acceptor is the D317. Phosphoenolpyruvate-binding residues include R348 and R390.

It belongs to the EPSP synthase family. As to quaternary structure, monomer.

Its subcellular location is the cytoplasm. It carries out the reaction 3-phosphoshikimate + phosphoenolpyruvate = 5-O-(1-carboxyvinyl)-3-phosphoshikimate + phosphate. The protein operates within metabolic intermediate biosynthesis; chorismate biosynthesis; chorismate from D-erythrose 4-phosphate and phosphoenolpyruvate: step 6/7. Its function is as follows. Catalyzes the transfer of the enolpyruvyl moiety of phosphoenolpyruvate (PEP) to the 5-hydroxyl of shikimate-3-phosphate (S3P) to produce enolpyruvyl shikimate-3-phosphate and inorganic phosphate. The chain is 3-phosphoshikimate 1-carboxyvinyltransferase from Herpetosiphon aurantiacus (strain ATCC 23779 / DSM 785 / 114-95).